The following is a 654-amino-acid chain: Heat shock 70 kDa protein 2 (654 aa).

The span at 612 to 646 (AGGEGGAPGAGFPGAGGPGGFPGAGAGGAHSGGDD) shows a compositional bias: gly residues. The disordered stretch occupies residues 612–654 (AGGEGGAPGAGFPGAGGPGGFPGAGAGGAHSGGDDGPTVEEVD).

Belongs to the heat shock protein 70 family.

The protein is Heat shock 70 kDa protein 2 (HSP70-2) of Paracoccidioides lutzii (strain ATCC MYA-826 / Pb01) (Paracoccidioides brasiliensis).